The chain runs to 56 residues: Sec-independent protein translocase protein TatA (56 aa).

A helical membrane pass occupies residues 1 to 21 (MALGPWQIFLILVIILVLFGA).

The protein belongs to the TatA/E family. As to quaternary structure, the Tat system comprises two distinct complexes: a TatABC complex, containing multiple copies of TatA, TatB and TatC subunits, and a separate TatA complex, containing only TatA subunits. Substrates initially bind to the TatABC complex, which probably triggers association of the separate TatA complex to form the active translocon.

The protein localises to the cell inner membrane. Its function is as follows. Part of the twin-arginine translocation (Tat) system that transports large folded proteins containing a characteristic twin-arginine motif in their signal peptide across membranes. TatA could form the protein-conducting channel of the Tat system. The chain is Sec-independent protein translocase protein TatA from Ehrlichia ruminantium (strain Welgevonden).